A 341-amino-acid polypeptide reads, in one-letter code: MTKDILILAVETSCDETSVSVIKNGRDILSNTVLSQIESHKRFGGVVPEVASRHHVEGITTTINEALVDADVSMEDIDAIAVTEGPGLIGALLIGVNAAKALAFAYDKPLIPVHHIAGHIYANHIEDLLTFPLIALIVSGGHTELVYMKDHLTFEVIGETRDDAVGEAYDKVARTIGLNYPGGPQVDRLAAEGEDTYSFPRVWLDKDSYDFSFSGLKSAVINQLHNQRQKNIPIIEANVATSFQNSVVEVLTFKAIQACKEYGVQRLIVAGGVASNKGLRQSLADQCKVNDIQLTIPSPKLCTDNAAMIGVAGHYLYQQGRFADLGLNGHSNIDLEEYSAE.

Residues histidine 115 and histidine 119 each contribute to the Fe cation site. Substrate is bound by residues 137 to 141 (IVSGG), aspartate 170, glycine 183, aspartate 187, and asparagine 276. Residue aspartate 304 participates in Fe cation binding.

This sequence belongs to the KAE1 / TsaD family. Fe(2+) is required as a cofactor.

It localises to the cytoplasm. It carries out the reaction L-threonylcarbamoyladenylate + adenosine(37) in tRNA = N(6)-L-threonylcarbamoyladenosine(37) in tRNA + AMP + H(+). Functionally, required for the formation of a threonylcarbamoyl group on adenosine at position 37 (t(6)A37) in tRNAs that read codons beginning with adenine. Is involved in the transfer of the threonylcarbamoyl moiety of threonylcarbamoyl-AMP (TC-AMP) to the N6 group of A37, together with TsaE and TsaB. TsaD likely plays a direct catalytic role in this reaction. The protein is tRNA N6-adenosine threonylcarbamoyltransferase of Staphylococcus aureus (strain bovine RF122 / ET3-1).